The following is an 85-amino-acid chain: MVGNMNREALFKTLTTGYLHFWSLSRKKLWLKGETSGNFQIIEEFKVDCDADAVLFKVTSLGPICHTGNYTCFYRSYDELVNSKS.

D48 provides a ligand contact to Mg(2+). Position 49 (C49) interacts with Zn(2+). Positions 50 and 52 each coordinate Mg(2+). C65 and C72 together coordinate Zn(2+).

It belongs to the PRA-CH family. As to quaternary structure, homodimer. Mg(2+) is required as a cofactor. Requires Zn(2+) as cofactor.

It is found in the cytoplasm. The enzyme catalyses 1-(5-phospho-beta-D-ribosyl)-5'-AMP + H2O = 1-(5-phospho-beta-D-ribosyl)-5-[(5-phospho-beta-D-ribosylamino)methylideneamino]imidazole-4-carboxamide. The protein operates within amino-acid biosynthesis; L-histidine biosynthesis; L-histidine from 5-phospho-alpha-D-ribose 1-diphosphate: step 3/9. Catalyzes the hydrolysis of the adenine ring of phosphoribosyl-AMP. In Saccharolobus solfataricus (strain ATCC 35092 / DSM 1617 / JCM 11322 / P2) (Sulfolobus solfataricus), this protein is Phosphoribosyl-AMP cyclohydrolase (hisI).